The following is a 125-amino-acid chain: Large ribosomal subunit protein bL12 (125 aa).

The protein belongs to the bacterial ribosomal protein bL12 family. Homodimer. Part of the ribosomal stalk of the 50S ribosomal subunit. Forms a multimeric L10(L12)X complex, where L10 forms an elongated spine to which 2 to 4 L12 dimers bind in a sequential fashion. Binds GTP-bound translation factors.

Its function is as follows. Forms part of the ribosomal stalk which helps the ribosome interact with GTP-bound translation factors. Is thus essential for accurate translation. In Paraburkholderia phymatum (strain DSM 17167 / CIP 108236 / LMG 21445 / STM815) (Burkholderia phymatum), this protein is Large ribosomal subunit protein bL12.